Here is a 22-residue protein sequence, read N- to C-terminus: Heliocin (22 aa).

Glutamine 1 bears the Pyrrolidone carboxylic acid mark. The tract at residues 1-22 (QRFIHPTYRPPPQPRRPVIMRA) is disordered. Residue threonine 7 is glycosylated (O-linked (GalNAc...) threonine).

Monomer. Hemolymph.

It is found in the secreted. Functionally, has antibacterial activity, preferentially against Gram-negative bacteria. In Heliothis virescens (Tobacco budworm moth), this protein is Heliocin.